Here is a 400-residue protein sequence, read N- to C-terminus: 3-hydroxykynurenine transaminase (400 aa).

Residues 43–44 (SN) form a binds to and confers specificity for 3-hydroxykynurenine; shared with dimeric partner region. Residues 77–79 (SAH), Ser-154, and Gln-204 each bind pyridoxal 5'-phosphate. Ser-154 provides a ligand contact to substrate. Lys-205 bears the N6-(pyridoxal phosphate)lysine mark. The pyridoxal 5'-phosphate site is built by Tyr-256 and Thr-259. Arg-356 is a substrate binding site.

This sequence belongs to the class-V pyridoxal-phosphate-dependent aminotransferase family. Homodimer. May form homotetramer. Pyridoxal 5'-phosphate serves as cofactor.

Its subcellular location is the peroxisome. It carries out the reaction glyoxylate + L-alanine = glycine + pyruvate. The enzyme catalyses L-kynurenine + glyoxylate = kynurenate + glycine + H2O. It catalyses the reaction 3-hydroxy-L-kynurenine + glyoxylate = xanthurenate + glycine + H2O. The catalysed reaction is 3-hydroxy-L-kynurenine + pyruvate = xanthurenate + L-alanine + H2O. It carries out the reaction L-kynurenine + pyruvate = kynurenate + L-alanine + H2O. The enzyme catalyses 2-oxobutanoate + L-alanine = (2S)-2-aminobutanoate + pyruvate. It catalyses the reaction L-phenylalanine + pyruvate = 3-phenylpyruvate + L-alanine. The catalysed reaction is L-serine + pyruvate = 3-hydroxypyruvate + L-alanine. It carries out the reaction L-cysteine + pyruvate = 2-oxo-3-sulfanylpropanoate + L-alanine. The enzyme catalyses 3-hydroxy-L-kynurenine + oxaloacetate = 4-(2-amino-3-hydroxyphenyl)-2,4-dioxobutanoate + L-aspartate. It catalyses the reaction 3-hydroxy-L-kynurenine + 3-phenylpyruvate = 4-(2-amino-3-hydroxyphenyl)-2,4-dioxobutanoate + L-phenylalanine. The catalysed reaction is L-kynurenine + oxaloacetate = 4-(2-aminophenyl)-2,4-dioxobutanoate + L-aspartate. It carries out the reaction 3-phenylpyruvate + L-kynurenine = 4-(2-aminophenyl)-2,4-dioxobutanoate + L-phenylalanine. It functions in the pathway amino-acid degradation; L-kynurenine degradation; kynurenate from L-kynurenine: step 1/2. In terms of biological role, catalyzes the pyridoxal 5'-phosphate-dependent transamination of both 3-hydroxykynurenine and L-kynurenine to xanthurenic acid and kynurenic acid, respectively, preferentially using the alpha-ketoacid pyruvate, glyoxylate or oxaloacetate as the amino group acceptor. The affinity and catalytic efficiency for 3-hydroxykynurenine is higher than for L-kynurenine. Involved in the detoxification of cytotoxic metabolite 3-hydroxykynurenine generated by the hydroxylation of L-kynurenine, an intermediate in the tryptophan catabolism pathway. Also catalyzes, although with a lesser efficiency, the transamination of alanine with glyoxylate as an amino group acceptor. May play a role in the detoxification of glyoxylate, a toxic plant metabolite from the diet. This Aedes aegypti (Yellowfever mosquito) protein is 3-hydroxykynurenine transaminase.